The sequence spans 251 residues: Meso-2,3-butanediol dehydrogenase (251 aa).

Residues N15, M17, D36, D60, V61, and N87 each contribute to the NAD(+) site. 3 residues coordinate (R)-acetoin: S138, S140, and Y151. S138 is a binding site for (S)-acetoin. Y151, K155, V184, and T186 together coordinate NAD(+). Y151 is a (S)-acetoin binding site. Residue Y151 is the Proton acceptor of the active site.

Belongs to the short-chain dehydrogenases/reductases (SDR) family. Homotetramer; dimer of dimers.

It carries out the reaction (R,S)-butane-2,3-diol + NAD(+) = (R)-acetoin + NADH + H(+). The enzyme catalyses (S,S)-butane-2,3-diol + NAD(+) = (S)-acetoin + NADH + H(+). The catalysed reaction is (S)-acetoin + NAD(+) = diacetyl + NADH + H(+). Oxidation of meso-2,3-butanediol is enhanced in the presence of Fe(2+). Reduction of diacetyl and (3S/3R)-acetoin is slightly enhanced in the presence of Mg(2+) and Mn(2+). Activity is inhibited by several metal ions, particularly Fe(3+) for reduction of diacetyl and acetoin. Catalyzes the NAD-dependent oxidation of meso-2,3-butanediol to (3R)-acetoin, and of (2S,3S)-2,3-butanediol to (3S)-acetoin, with much lower efficiency. Can also oxidize several primary alcohols such as glycerol, 1-2-pentanediol and 1,2-propanediol, with lower activity. Cannot use (2R,3R)-2,3-butanediol. In the presence of NADH, catalyzes the reduction of (3R)-acetoin to meso-2,3-butanediol, of (3S)-acetoin to (2S,3S)-2,3-butanediol and of diacetyl to (3S)-acetoin. No activity is detected with NADPH/NADP(+). The protein is Meso-2,3-butanediol dehydrogenase of Serratia marcescens.